The sequence spans 104 residues: Cell division topological specificity factor (104 aa).

The protein belongs to the MinE family.

Functionally, prevents the cell division inhibition by proteins MinC and MinD at internal division sites while permitting inhibition at polar sites. This ensures cell division at the proper site by restricting the formation of a division septum at the midpoint of the long axis of the cell. The protein is Cell division topological specificity factor of Sorangium cellulosum (strain So ce56) (Polyangium cellulosum (strain So ce56)).